Consider the following 300-residue polypeptide: UDP-N-acetylenolpyruvoylglucosamine reductase (300 aa).

An FAD-binding PCMH-type domain is found at 27–192; that stretch reads KVGGPADYLA…ISAKFALKPG (166 aa). R171 is an active-site residue. Residue S221 is the Proton donor of the active site. The active site involves E291.

This sequence belongs to the MurB family. It depends on FAD as a cofactor.

Its subcellular location is the cytoplasm. The enzyme catalyses UDP-N-acetyl-alpha-D-muramate + NADP(+) = UDP-N-acetyl-3-O-(1-carboxyvinyl)-alpha-D-glucosamine + NADPH + H(+). It functions in the pathway cell wall biogenesis; peptidoglycan biosynthesis. Functionally, cell wall formation. In Streptococcus agalactiae serotype Ia (strain ATCC 27591 / A909 / CDC SS700), this protein is UDP-N-acetylenolpyruvoylglucosamine reductase.